Here is a 185-residue protein sequence, read N- to C-terminus: CASP-like protein 5A1 (185 aa).

Over 1–48 (MNVSHPAVHPVGVPPALGGQAVPPRMRMRVRMEYLVFQGMPLPGSLGG) the chain is Cytoplasmic. The chain crosses the membrane as a helical span at residues 49–69 (LMLRLGQFCSALIAFSVMVSI). The Extracellular portion of the chain corresponds to 70-76 (RDFSVTA). Residues 77-97 (FCYLLAATVLQCLWSLALAVI) traverse the membrane as a helical segment. The Cytoplasmic segment spans residues 98–121 (DVYALLVKRSLRNPLLVSIFVVGD). The chain crosses the membrane as a helical span at residues 122 to 142 (GVTATLTFAAACASAGVVVLI). Topologically, residues 143 to 160 (GNDISMCKSNPCANYEAA) are extracellular. A helical membrane pass occupies residues 161-181 (IIMAFLSWFMVSISFVLTFWM). The Cytoplasmic portion of the chain corresponds to 182–185 (LATL).

This sequence belongs to the Casparian strip membrane proteins (CASP) family. As to quaternary structure, homodimer and heterodimers.

It localises to the cell membrane. The sequence is that of CASP-like protein 5A1 from Pinus contorta (Shore pine).